Consider the following 964-residue polypeptide: Probable outer membrane protein PmpE (964 aa).

Positions 1–18 (MKKAFFFFLIGNSLSGLA) are cleaved as a signal peptide. The 282-residue stretch at 683–964 (LTPSGHPFWG…YLNGEIALRF (282 aa)) folds into the Autotransporter domain.

This sequence belongs to the PMP outer membrane protein family.

It localises to the secreted. The protein resides in the cell wall. Its subcellular location is the cell outer membrane. The chain is Probable outer membrane protein PmpE (pmpE) from Chlamydia trachomatis serovar D (strain ATCC VR-885 / DSM 19411 / UW-3/Cx).